The sequence spans 421 residues: 4-hydroxy-3-methylbut-2-en-1-yl diphosphate synthase (flavodoxin) (421 aa).

The [4Fe-4S] cluster site is built by Cys298, Cys301, Cys344, and Glu351.

This sequence belongs to the IspG family. It depends on [4Fe-4S] cluster as a cofactor.

It carries out the reaction (2E)-4-hydroxy-3-methylbut-2-enyl diphosphate + oxidized [flavodoxin] + H2O + 2 H(+) = 2-C-methyl-D-erythritol 2,4-cyclic diphosphate + reduced [flavodoxin]. Its pathway is isoprenoid biosynthesis; isopentenyl diphosphate biosynthesis via DXP pathway; isopentenyl diphosphate from 1-deoxy-D-xylulose 5-phosphate: step 5/6. In terms of biological role, converts 2C-methyl-D-erythritol 2,4-cyclodiphosphate (ME-2,4cPP) into 1-hydroxy-2-methyl-2-(E)-butenyl 4-diphosphate. The chain is 4-hydroxy-3-methylbut-2-en-1-yl diphosphate synthase (flavodoxin) from Neisseria meningitidis serogroup C (strain 053442).